Here is a 70-residue protein sequence, read N- to C-terminus: Putative venom toxin Ts29 (70 aa).

An N-terminal signal peptide occupies residues 1-20; that stretch reads MSPLFVVLLIATTTFYHSDA.

Expressed by the venom gland.

Its subcellular location is the secreted. The chain is Putative venom toxin Ts29 from Tityus serrulatus (Brazilian scorpion).